Consider the following 949-residue polypeptide: Bifunctional uridylyltransferase/uridylyl-removing enzyme (949 aa).

Residues 1-377 are uridylyltransferase; it reads MARHETSFPE…RFRNRVRKIP (377 aa). Residues 378–733 are uridylyl-removing; the sequence is GTLDFVDDGG…VRTHDFHAIT (356 aa). Residues 494–610 enclose the HD domain; sequence VDEHLLRAVD…VDFAERVQSL (117 aa). ACT domains are found at residues 734-815 and 845-926; these read EITV…DVIA and VIEV…ERMP. The segment at 925–949 is disordered; the sequence is MPSGIIAPTPVPRASHGSKATKAET.

The protein belongs to the GlnD family. The cofactor is Mg(2+).

It carries out the reaction [protein-PII]-L-tyrosine + UTP = [protein-PII]-uridylyl-L-tyrosine + diphosphate. The enzyme catalyses [protein-PII]-uridylyl-L-tyrosine + H2O = [protein-PII]-L-tyrosine + UMP + H(+). With respect to regulation, uridylyltransferase (UTase) activity is inhibited by glutamine, while glutamine activates uridylyl-removing (UR) activity. Functionally, modifies, by uridylylation and deuridylylation, the PII regulatory proteins (GlnB and homologs), in response to the nitrogen status of the cell that GlnD senses through the glutamine level. Under low glutamine levels, catalyzes the conversion of the PII proteins and UTP to PII-UMP and PPi, while under higher glutamine levels, GlnD hydrolyzes PII-UMP to PII and UMP (deuridylylation). Thus, controls uridylylation state and activity of the PII proteins, and plays an important role in the regulation of nitrogen fixation and metabolism. In Sinorhizobium medicae (strain WSM419) (Ensifer medicae), this protein is Bifunctional uridylyltransferase/uridylyl-removing enzyme.